Reading from the N-terminus, the 318-residue chain is Acetyl-coenzyme A carboxylase carboxyl transferase subunit alpha (318 aa).

Positions 41-295 constitute a CoA carboxyltransferase C-terminal domain; it reads RLTTKSQELT…KRQLIADLGS (255 aa).

Belongs to the AccA family. In terms of assembly, acetyl-CoA carboxylase is a heterohexamer composed of biotin carboxyl carrier protein (AccB), biotin carboxylase (AccC) and two subunits each of ACCase subunit alpha (AccA) and ACCase subunit beta (AccD).

It is found in the cytoplasm. It catalyses the reaction N(6)-carboxybiotinyl-L-lysyl-[protein] + acetyl-CoA = N(6)-biotinyl-L-lysyl-[protein] + malonyl-CoA. It functions in the pathway lipid metabolism; malonyl-CoA biosynthesis; malonyl-CoA from acetyl-CoA: step 1/1. Component of the acetyl coenzyme A carboxylase (ACC) complex. First, biotin carboxylase catalyzes the carboxylation of biotin on its carrier protein (BCCP) and then the CO(2) group is transferred by the carboxyltransferase to acetyl-CoA to form malonyl-CoA. In Idiomarina loihiensis (strain ATCC BAA-735 / DSM 15497 / L2-TR), this protein is Acetyl-coenzyme A carboxylase carboxyl transferase subunit alpha.